A 216-amino-acid chain; its full sequence is Thymidine kinase (216 aa).

Residues 9–16 and 86–89 contribute to the ATP site; these read GTMDCGKS and DEAQ. Glu87 acts as the Proton acceptor in catalysis.

This sequence belongs to the thymidine kinase family. In terms of assembly, homotetramer.

It localises to the cytoplasm. The enzyme catalyses thymidine + ATP = dTMP + ADP + H(+). The chain is Thymidine kinase from Streptomyces coelicolor (strain ATCC BAA-471 / A3(2) / M145).